Reading from the N-terminus, the 288-residue chain is 2-methoxy-6-polyprenyl-1,4-benzoquinol methylase, mitochondrial (288 aa).

Residues threonine 68, aspartate 102, and serine 146 each coordinate S-adenosyl-L-methionine. Over residues 260–270 (PITPTTSSDIP) the composition is skewed to low complexity. A disordered region spans residues 260–288 (PITPTTSSDIPAQNTSEATCEVKPEPNSA). Residues 279 to 288 (CEVKPEPNSA) are compositionally biased toward basic and acidic residues.

Belongs to the class I-like SAM-binding methyltransferase superfamily. MenG/UbiE family. In terms of assembly, component of a multi-subunit COQ enzyme complex.

The protein resides in the mitochondrion inner membrane. It catalyses the reaction a 2-methoxy-6-(all-trans-polyprenyl)benzene-1,4-diol + S-adenosyl-L-methionine = a 5-methoxy-2-methyl-3-(all-trans-polyprenyl)benzene-1,4-diol + S-adenosyl-L-homocysteine + H(+). It participates in cofactor biosynthesis; ubiquinone biosynthesis. Its function is as follows. Methyltransferase required for the conversion of 2-polyprenyl-6-methoxy-1,4-benzoquinol (DDMQH2) to 2-polyprenyl-3-methyl-6-methoxy-1,4-benzoquinol (DMQH2). This Leishmania donovani protein is 2-methoxy-6-polyprenyl-1,4-benzoquinol methylase, mitochondrial.